We begin with the raw amino-acid sequence, 396 residues long: S-adenosylmethionine synthase (396 aa).

An ATP-binding site is contributed by His16. Asp18 is a Mg(2+) binding site. Glu44 lines the K(+) pocket. Glu57 and Gln100 together coordinate L-methionine. The tract at residues 100–110 is flexible loop; that stretch reads QSPDINQGVDR. ATP is bound by residues 165–167, Asp240, 246–247, Ala263, and Lys267; these read DAK and RK. Asp240 lines the L-methionine pocket. L-methionine is bound at residue Lys271.

The protein belongs to the AdoMet synthase family. As to quaternary structure, homotetramer; dimer of dimers. Mg(2+) is required as a cofactor. Requires K(+) as cofactor.

The protein localises to the cytoplasm. The enzyme catalyses L-methionine + ATP + H2O = S-adenosyl-L-methionine + phosphate + diphosphate. The protein operates within amino-acid biosynthesis; S-adenosyl-L-methionine biosynthesis; S-adenosyl-L-methionine from L-methionine: step 1/1. Catalyzes the formation of S-adenosylmethionine (AdoMet) from methionine and ATP. The overall synthetic reaction is composed of two sequential steps, AdoMet formation and the subsequent tripolyphosphate hydrolysis which occurs prior to release of AdoMet from the enzyme. The protein is S-adenosylmethionine synthase of Pseudomonas fluorescens (strain SBW25).